Here is a 921-residue protein sequence, read N- to C-terminus: Retinoblastoma-associated protein (921 aa).

Disordered regions lie at residues 1–31 (MPPK…PPGG) and 603–634 (RSPK…QKPQ). Positions 612–634 (HPQSGTSNPDAQPSATSQTQKPQ) are enriched in polar residues. Residues 853–869 (KRSAEPSDAPKPLKRLR) carry the Bipartite nuclear localization signal motif. Residues 873-921 (EGQDEADGGKHLPQESKFQQKLAEMTSTRTRMQKQKLNDGNDTSANEEK) form a disordered region. The span at 910-921 (NDGNDTSANEEK) shows a compositional bias: polar residues.

This sequence belongs to the retinoblastoma protein (RB) family. In terms of assembly, interacts with and sequesters the E2F1 transcription factor, thereby inhibiting E2F1 transcription. Interacts with SUV39H1, KMT5B and KMT5C. (Microbial infection) Interacts with, and is inhibited by fowl adenovirus 1 protein GAM-1. Phosphorylated in G1, thereby releasing E2F1 which is then able to activate cell growth. Dephosphorylated at the late M phase. Phosphorylation of domain C promotes interaction between the C-terminal domain C and the Pocket domain, and thereby inhibits interactions with heterodimeric E2F/DP transcription factor complexes.

Its subcellular location is the nucleus. The protein resides in the cytoplasm. Tumor suppressor that is a key regulator of the G1/S transition of the cell cycle. The hypophosphorylated form binds transcription regulators of the E2F family, preventing transcription of E2F-responsive genes. Both physically blocks E2Fs transactivating domain and recruits chromatin-modifying enzymes that actively repress transcription. Cyclin and CDK-dependent phosphorylation of RB1 induces its dissociation from E2Fs, thereby activating transcription of E2F responsive genes and triggering entry into S phase. RB1 also promotes the G0-G1 transition upon phosphorylation and activation by CDK3/cyclin-C. In Gallus gallus (Chicken), this protein is Retinoblastoma-associated protein (RB1).